A 1529-amino-acid chain; its full sequence is DNA (cytosine-5)-methyltransferase 1B (1529 aa).

Disordered stretches follow at residues 1-56 (MVKS…RAAC) and 674-706 (DDEL…TRSR). The span at 21–35 (QKKDEDTTDKGKLDE) shows a compositional bias: basic and acidic residues. The segment covering 674–694 (DDELEENEDEDAEEEAQIEEE) has biased composition (acidic residues). The segment covering 697-706 (SKTPPSTRSR) has biased composition (polar residues). BAH domains follow at residues 741–873 (LRIN…FSLP) and 910–1049 (ITYN…KQLP). One can recognise an SAM-dependent MTase C5-type domain in the interval 1093–1527 (LATLDIFAGC…RKLKEAVDAK (435 aa)). The active site involves Cys1198.

It belongs to the class I-like SAM-binding methyltransferase superfamily. C5-methyltransferase family. As to expression, expressed in roots and inflorescences. Expressed in roots, panicles, anthers, pistils, endosperm and imbibed embryos. Expressed in tissues containing actively replicating and dividing cells, such as shoot and root meristems.

It localises to the nucleus. It catalyses the reaction a 2'-deoxycytidine in DNA + S-adenosyl-L-methionine = a 5-methyl-2'-deoxycytidine in DNA + S-adenosyl-L-homocysteine + H(+). Major CG methylase that methylates chromatin CpG residues and maintains DNA methylation. Plays a major role in genomic imprinting, regulation of embryogenesis and seed viability. Maintains DNA methylation at the FIE1 gene locus in the embryo. The chain is DNA (cytosine-5)-methyltransferase 1B (MET1B) from Oryza sativa subsp. japonica (Rice).